Consider the following 295-residue polypeptide: uncharacterized protein (295 aa).

The signal sequence occupies residues 1–19 (MHKLLLIITVFSTFNVAQA).

This is an uncharacterized protein from Rickettsia typhi (strain ATCC VR-144 / Wilmington).